An 89-amino-acid polypeptide reads, in one-letter code: DNA/RNA-binding protein Alba (89 aa).

Lysine 11 carries the N6-acetyllysine modification.

Belongs to the histone-like Alba family. In terms of processing, acetylated. Acetylation at Lys-11 decreases DNA-binding affinity.

It localises to the cytoplasm. The protein localises to the chromosome. Its function is as follows. Binds double-stranded DNA tightly but without sequence specificity. Involved in DNA compaction. This is DNA/RNA-binding protein Alba from Thermoplasma acidophilum (strain ATCC 25905 / DSM 1728 / JCM 9062 / NBRC 15155 / AMRC-C165).